The chain runs to 215 residues: GTP-binding nuclear protein ran-1 (215 aa).

The 165-residue stretch at 6 to 170 (GIPTFKLVLV…LWLARKLLGD (165 aa)) folds into the Small GTPase Ran-type domain. 17-24 (DGGTGKTT) contributes to the GTP binding site. The interval 36–44 (KKYVATLGV) is switch-I. Residues glycine 67, 121 to 124 (NKVD), and 149 to 151 (SAK) contribute to the GTP site. The interval 67–83 (GQEKFGGLRDGYYIQGQ) is switch-II.

The protein belongs to the small GTPase superfamily. Ran family. In terms of assembly, found in a nuclear export complex with RanGTP, exportin and pre-miRNA.

It localises to the nucleus. The protein localises to the chromosome. Its subcellular location is the centromere. The protein resides in the kinetochore. In terms of biological role, ran GTPase system comprises ran-1, ran-2 and ran-3 and is essential in nucleocytoplasmic transport. Ran-1 is a GTP-binding protein that mediates the interaction between mitotic chromosomes and kinetochore microtubules. Plays a crucial role in nuclear envelope assembly at the end of each cell division. Required for the import of protein into the nucleus and also for RNA export. RCC1 (ran-3)/Ran (ran-1) complex (together with other proteins) acts as a component of a signal transmission pathway that detects unreplicated DNA. The protein is GTP-binding nuclear protein ran-1 (ran-1) of Caenorhabditis elegans.